We begin with the raw amino-acid sequence, 291 residues long: Glucose and ribitol dehydrogenase (291 aa).

The disordered stretch occupies residues 1-35 (MASGGQFPPQKQESQPGKEHLMDPSPQHASPHYKP). 45–69 (LVTGGDSGIGRSVCYHFALEGATVA) is an NAD(+) binding site. Ser183 contacts substrate. Tyr196 (proton acceptor) is an active-site residue.

The protein belongs to the short-chain dehydrogenases/reductases (SDR) family. In terms of tissue distribution, expressed in embryogenic cells, somatic embryos and seeds in the later stages of development, but not in non-embryogenic cells and mature leaves.

Functionally, may act as a short alcohol-polyol-sugar dehydrogenase possibly related to carbohydrate metabolism and the acquisition of desiccation tolerance. May also be involved in signal transduction. The chain is Glucose and ribitol dehydrogenase (CAISE5) from Daucus carota (Wild carrot).